A 310-amino-acid chain; its full sequence is HPr kinase/phosphorylase (310 aa).

Catalysis depends on residues His138 and Lys159. Position 153–160 (153–160 (GKSGVGKS)) interacts with ATP. Ser160 provides a ligand contact to Mg(2+). The active-site Proton acceptor; for phosphorylation activity. Proton donor; for dephosphorylation activity is the Asp177. An important for the catalytic mechanism of both phosphorylation and dephosphorylation region spans residues 201–210 (LEIRGLGIIN). Glu202 contributes to the Mg(2+) binding site. Residue Arg243 is part of the active site. The important for the catalytic mechanism of dephosphorylation stretch occupies residues 264–269 (PVRPGR).

The protein belongs to the HPrK/P family. As to quaternary structure, homohexamer. The cofactor is Mg(2+).

It catalyses the reaction [HPr protein]-L-serine + ATP = [HPr protein]-O-phospho-L-serine + ADP + H(+). It carries out the reaction [HPr protein]-O-phospho-L-serine + phosphate + H(+) = [HPr protein]-L-serine + diphosphate. In terms of biological role, catalyzes the ATP- as well as the pyrophosphate-dependent phosphorylation of a specific serine residue in HPr, a phosphocarrier protein of the phosphoenolpyruvate-dependent sugar phosphotransferase system (PTS). HprK/P also catalyzes the pyrophosphate-producing, inorganic phosphate-dependent dephosphorylation (phosphorolysis) of seryl-phosphorylated HPr (P-Ser-HPr). The two antagonistic activities of HprK/P are regulated by several intracellular metabolites, which change their concentration in response to the absence or presence of rapidly metabolisable carbon sources (glucose, fructose, etc.) in the growth medium. Also phosphorylates/dephosphorylates the HPr-like catabolite repression protein crh on a specific serine residue. Therefore, by controlling the phosphorylation state of HPr and crh, HPrK/P is a sensor enzyme that plays a major role in the regulation of carbon metabolism and sugar transport: it mediates carbon catabolite repression (CCR), and regulates PTS-catalyzed carbohydrate uptake and inducer exclusion. The chain is HPr kinase/phosphorylase from Bacillus pumilus (strain SAFR-032).